Here is a 205-residue protein sequence, read N- to C-terminus: Probable thymidylate kinase (205 aa).

Position 10 to 17 (10 to 17 (GIDGSGKT)) interacts with ATP.

The protein belongs to the thymidylate kinase family.

It carries out the reaction dTMP + ATP = dTDP + ADP. This is Probable thymidylate kinase (tmk) from Pyrococcus abyssi (strain GE5 / Orsay).